The primary structure comprises 435 residues: Nuclear hormone receptor family member nhr-136 (435 aa).

A DNA-binding region (nuclear receptor) is located at residues 50-129; the sequence is PSNCKVCRHS…AGMNPSAIQA (80 aa). 2 NR C4-type zinc fingers span residues 53-73 and 89-112; these read CKVC…CNGC and CLKM…CRAC. An NR LBD domain is found at 194-430; the sequence is RDIRKLDELI…RYTRISNLYE (237 aa).

Belongs to the nuclear hormone receptor family.

The protein localises to the nucleus. Orphan nuclear receptor. The sequence is that of Nuclear hormone receptor family member nhr-136 (nhr-136) from Caenorhabditis elegans.